We begin with the raw amino-acid sequence, 339 residues long: Glucokinase (339 aa).

16 to 21 (GDIGGT) provides a ligand contact to ATP.

This sequence belongs to the bacterial glucokinase family.

The protein resides in the cytoplasm. The enzyme catalyses D-glucose + ATP = D-glucose 6-phosphate + ADP + H(+). The chain is Glucokinase from Pseudomonas paraeruginosa (strain DSM 24068 / PA7) (Pseudomonas aeruginosa (strain PA7)).